We begin with the raw amino-acid sequence, 315 residues long: MPGGRNSTVITKFILVGFSDFPKLKLVLFVIFLGSYLSTVVWNLGLIILIRIDPYLHTPMYFFLSNLSFLDFCYISSTTPKMLSGFFQKSKSISFVGCTMQYFIFSSLGLSECCLLAAMAYDRYAAICNPLLYTAIMSPSLCVHMVVGAYSTGLLGSLIQLCAILQLHFCGPNIINHFFCDLPQLLVLSCSETFPLQVLKFVIAVIFGVASVIVILISYGYIIGTILNISSVEGRSKAFNTCASHLTAVTLFFGSGLFVYMRPSSNSSQGYDKMASVFYTVVIPMLNPLIYSLRNKEIKDALQRCKNKCFSQCHC.

At 1–29 (MPGGRNSTVITKFILVGFSDFPKLKLVLF) the chain is on the extracellular side. A helical membrane pass occupies residues 30–50 (VIFLGSYLSTVVWNLGLIILI). Residues 51–54 (RIDP) lie on the Cytoplasmic side of the membrane. A helical transmembrane segment spans residues 55–75 (YLHTPMYFFLSNLSFLDFCYI). Topologically, residues 76 to 99 (SSTTPKMLSGFFQKSKSISFVGCT) are extracellular. Cys-98 and Cys-180 are oxidised to a cystine. Residues 100–120 (MQYFIFSSLGLSECCLLAAMA) traverse the membrane as a helical segment. The Cytoplasmic portion of the chain corresponds to 121-123 (YDR). Residues 124-143 (YAAICNPLLYTAIMSPSLCV) form a helical membrane-spanning segment. His-144 is a topological domain (extracellular). The helical transmembrane segment at 145 to 165 (MVVGAYSTGLLGSLIQLCAIL) threads the bilayer. Over 166-202 (QLHFCGPNIINHFFCDLPQLLVLSCSETFPLQVLKFV) the chain is Cytoplasmic. The helical transmembrane segment at 203-223 (IAVIFGVASVIVILISYGYII) threads the bilayer. The Extracellular segment spans residues 224–240 (GTILNISSVEGRSKAFN). A helical membrane pass occupies residues 241–261 (TCASHLTAVTLFFGSGLFVYM). Residues 262 to 272 (RPSSNSSQGYD) are Cytoplasmic-facing. The helical transmembrane segment at 273–293 (KMASVFYTVVIPMLNPLIYSL) threads the bilayer. The Extracellular portion of the chain corresponds to 294-315 (RNKEIKDALQRCKNKCFSQCHC).

The protein belongs to the G-protein coupled receptor 1 family. Localized in the dorsomedial and ventral region of the olfactory bulb.

The protein localises to the cell membrane. Functionally, odorant receptor specific for muscone. Muscone-binding causes a conformation change that triggers signaling via G(s)-class of G alpha protein GNAL, activating adenylyl cyclase. The chain is Olfactory receptor 5AN6 from Mus musculus (Mouse).